The primary structure comprises 325 residues: Myo-inositol dehydrogenase Hyg17 (325 aa).

This sequence belongs to the Gfo/Idh/MocA family.

It catalyses the reaction myo-inositol + NAD(+) = myo-inosose-5 + NADH + H(+). It functions in the pathway antibiotic biosynthesis. In terms of biological role, dehydrogenase involved in the biosynthesis of the aminocyclitol moiety of hygromycin A, a broad-spectrum antibiotic. Catalyzes the NAD(+)-dependent oxidation of myo-inositol to myo-inosose-5 (neo-inosose). Shows reduced activity with scyllo-inositol, minimal activity with L-chiro-inositol and no activity with D-glucose, D-chiro-inositol, epi-inositol, muco-inositol and allo-inositol. Is specific for NAD(+) and cannot use NADP(+). The chain is Myo-inositol dehydrogenase Hyg17 from Streptomyces leeuwenhoekii.